Here is a 629-residue protein sequence, read N- to C-terminus: tRNA uridine 5-carboxymethylaminomethyl modification enzyme MnmG (629 aa).

FAD contacts are provided by residues 14 to 19, Val126, and Ser181; that span reads GAGHAG. 273 to 287 contacts NAD(+); it reads GPRYCPSIEDKVVRF. Gln370 is a binding site for FAD.

It belongs to the MnmG family. As to quaternary structure, homodimer. Heterotetramer of two MnmE and two MnmG subunits. FAD is required as a cofactor.

Its subcellular location is the cytoplasm. Functionally, NAD-binding protein involved in the addition of a carboxymethylaminomethyl (cmnm) group at the wobble position (U34) of certain tRNAs, forming tRNA-cmnm(5)s(2)U34. In Geobacillus thermodenitrificans (strain NG80-2), this protein is tRNA uridine 5-carboxymethylaminomethyl modification enzyme MnmG.